Reading from the N-terminus, the 129-residue chain is Beta-galactoside-binding lectin (129 aa).

S1 carries the N-acetylserine modification. Positions 4–129 constitute a Galectin domain; the sequence is GVVDERMSFK…EARIYSIEIK (126 aa). Residue 69–75 coordinates a beta-D-galactoside; sequence WGTEQRE.

In terms of biological role, this protein binds beta-galactoside. Its physiological function is not yet known. This is Beta-galactoside-binding lectin from Electrophorus electricus (Electric eel).